The primary structure comprises 180 residues: MDWPHNLLFLLTISIFLGLGQPRSPKSKRKGQGRPGPLAPGPHQVPLDLVSRMKPYARMEEYERNIEEMVAQLRNSSELAQRKCEVNLQLWMSNKRSLSPWGYSINHDPSRIPVDLPEARCLCLGCVNPFTMQEDRSMVSVPVFSQVPVRRRLCPPPPRTGPCRQRAVMETIAVGCTCIF.

Residues 1 to 20 form the signal peptide; that stretch reads MDWPHNLLFLLTISIFLGLG. The interval 22-44 is disordered; the sequence is PRSPKSKRKGQGRPGPLAPGPHQ. Asn-75 carries an N-linked (GlcNAc...) asparagine glycan. Intrachain disulfides connect Cys-121–Cys-176 and Cys-126–Cys-178.

This sequence belongs to the IL-17 family. As to expression, expressed in adult pancreas, small intestine, stomach, spinal cord and testis. Less pronounced expression in prostate, colon mucosal lining, and ovary.

The protein resides in the secreted. Functionally, stimulates the release of tumor necrosis factor alpha and IL-1-beta from the monocytic cell line THP-1. This chain is Interleukin-17B (IL17B), found in Homo sapiens (Human).